The chain runs to 630 residues: Glutathione hydrolase proenzyme 1 (630 aa).

Residues 1–49 (MGINTSSAQSSGAASIARSSVNVKSGNRHLSSNKKSATSALEERASRPS) lie on the Cytoplasmic side of the membrane. Residues 50 to 70 (ILVTFLVLAGTILSLYIWPIL) traverse the membrane as a helical; Signal-anchor for type II membrane protein segment. Residues 71 to 630 (SPDLFFANQR…SRKQAVAAAY (560 aa)) are Lumenal-facing. An N-linked (GlcNAc...) asparagine glycan is attached at Asn-156. Arg-165 serves as a coordination point for L-glutamate. Asn-180, Asn-315, Asn-397, and Asn-417 each carry an N-linked (GlcNAc...) asparagine glycan. The Nucleophile role is filled by Thr-441. L-glutamate-binding positions include Ser-459, Asn-461, Asp-483, 511 to 512 (SS), and 532 to 533 (GG). Asn-612 carries an N-linked (GlcNAc...) asparagine glycan.

This sequence belongs to the gamma-glutamyltransferase family. As to quaternary structure, heterodimer composed of the light and heavy chains. The active site is located in the light chain. Cleaved by autocatalysis into a large and a small subunit.

It is found in the endoplasmic reticulum membrane. It carries out the reaction an N-terminal (5-L-glutamyl)-[peptide] + an alpha-amino acid = 5-L-glutamyl amino acid + an N-terminal L-alpha-aminoacyl-[peptide]. It catalyses the reaction glutathione + H2O = L-cysteinylglycine + L-glutamate. The catalysed reaction is an S-substituted glutathione + H2O = an S-substituted L-cysteinylglycine + L-glutamate. It functions in the pathway sulfur metabolism; glutathione metabolism. Catalyzes the transfer of the gamma-glutamyl moiety of glutathione (GSH) and other gamma-glutamyl compounds to amino acids and peptides. Major GSH-degrading enzyme, catalyzing the hydrolytic release of L-glutamate from GSH. This chain is Glutathione hydrolase proenzyme 1 (ggt1), found in Schizosaccharomyces pombe (strain 972 / ATCC 24843) (Fission yeast).